The chain runs to 241 residues: Triosephosphate isomerase (241 aa).

Residue 9 to 11 (NWK) participates in substrate binding. Catalysis depends on His-96, which acts as the Electrophile. Residue Glu-165 is the Proton acceptor of the active site. Substrate is bound by residues Gly-171, Ser-204, and 225 to 226 (GG).

The protein belongs to the triosephosphate isomerase family. In terms of assembly, homodimer.

The protein localises to the cytoplasm. The catalysed reaction is D-glyceraldehyde 3-phosphate = dihydroxyacetone phosphate. Its pathway is carbohydrate biosynthesis; gluconeogenesis. The protein operates within carbohydrate degradation; glycolysis; D-glyceraldehyde 3-phosphate from glycerone phosphate: step 1/1. In terms of biological role, involved in the gluconeogenesis. Catalyzes stereospecifically the conversion of dihydroxyacetone phosphate (DHAP) to D-glyceraldehyde-3-phosphate (G3P). The protein is Triosephosphate isomerase of Prochlorococcus marinus (strain MIT 9301).